The chain runs to 398 residues: 1-deoxy-D-xylulose 5-phosphate reductoisomerase (398 aa).

Positions 10, 11, 12, 13, 36, 37, 38, and 124 each coordinate NADPH. Residue lysine 125 coordinates 1-deoxy-D-xylulose 5-phosphate. An NADPH-binding site is contributed by glutamate 126. Aspartate 150 provides a ligand contact to Mn(2+). 1-deoxy-D-xylulose 5-phosphate-binding residues include serine 151, glutamate 152, serine 186, and histidine 209. Glutamate 152 provides a ligand contact to Mn(2+). Glycine 215 is an NADPH binding site. 1-deoxy-D-xylulose 5-phosphate contacts are provided by serine 222, asparagine 227, lysine 228, and glutamate 231. Glutamate 231 provides a ligand contact to Mn(2+).

The protein belongs to the DXR family. Homodimer. It depends on Mg(2+) as a cofactor. Mn(2+) is required as a cofactor.

The enzyme catalyses 2-C-methyl-D-erythritol 4-phosphate + NADP(+) = 1-deoxy-D-xylulose 5-phosphate + NADPH + H(+). It functions in the pathway isoprenoid biosynthesis; isopentenyl diphosphate biosynthesis via DXP pathway; isopentenyl diphosphate from 1-deoxy-D-xylulose 5-phosphate: step 1/6. In terms of biological role, catalyzes the NADPH-dependent rearrangement and reduction of 1-deoxy-D-xylulose-5-phosphate (DXP) to 2-C-methyl-D-erythritol 4-phosphate (MEP). This is 1-deoxy-D-xylulose 5-phosphate reductoisomerase from Escherichia coli O157:H7.